Reading from the N-terminus, the 859-residue chain is MRDTSSGRMRTGVTGLALAVMVACVMFRAESGIARTYSFDAAMLKGGGKGVDLTLFEEGGQLPGIYPVDIILNGSRVDSQEMAFHAERDAEGRPYLKTCLTREMLARYGVRIEEYPALFRASGEGRGASVAEEACADLTAIPQATESYQFAAQQLVLGIPQVAPSAAEGDWPEALWDDGIPAFLLNWQANAGRSEYRGYGKRVTDSYWVSLQPGINIGPWRVRNLTTWNRSSGQSGKWESSYIRAERGLNGIKSRLTLGEDYTPSDIFDSVPFRGAMMSSDESMVPYNLREFAPVVRGIARTQARIEVRQNGYLIQSQTVAPGAFALTDLPVTGSGSDLQVTVLESDGTAQVFTVPFTTPAIALREGYLKYNVTAGQYRSSDDAVEHTSLGQVTAMYGLPWGLTVYGGLQGADDYQSAALGLGWSLGRLGAVSLDTTHSRGQQKGHDYETGDTWRIRYNKSFELTGTSFTAASYQYSSDGYHTLPDVLDTWRDDRYAYRHTENRSRRTTLSLSQSLGQWGYVGLNGSRDEYRDRPHRDYFGASYSTSWNNISLSVNWSRNRNSGGYYGGWSRTEDSVSMWMSVPLGRWFGGADNDISTTAQMQRSTGQDTRYEAGLNGRAFDRRLYWDVREQMVPGSESHADTSRLNLTWYGTYGELTGMYSYSSTMRQLNAGMSGSMVAHSEGVTFGQRTGDTVALIAAPGVSGASVGGWPGVRTDFRGYTLAGYASPYQENVLTLDPTTFPEDAEVPQTDSRVVPTKGAVVRAGFRTRVGGRALVSLARQDGTPLPFGAVVTVEGERGQAAGSAGVVGDRGEVYLSGLKESGKLKAQWGENSLCHADYRLPEEKGPAGIFLTRTVCM.

The first 28 residues, 1 to 28 (MRDTSSGRMRTGVTGLALAVMVACVMFR), serve as a signal peptide directing secretion.

The protein belongs to the fimbrial export usher family.

Its subcellular location is the cell outer membrane. In terms of biological role, involved in the export and assembly of AFA-III afimbrial adhesin subunits across the outer membrane. This is Outer membrane usher protein AfaC (afaC) from Escherichia coli.